A 46-amino-acid chain; its full sequence is Mu-segestritoxin-Sf1b (46 aa).

4 cysteine pairs are disulfide-bonded: Cys3–Cys19, Cys10–Cys22, Cys18–Cys42, and Cys24–Cys40. The tract at residues Arg31 to Trp33 is keys region for toxin activity.

The protein belongs to the neurotoxin 16 (SFI) family. In terms of tissue distribution, expressed by the venom gland.

It is found in the secreted. Functionally, insecticidal toxin. Causes flaccid paralysis followed by death when injected into Heliothis virescens larvae. Does not induce any toxic effects when injected intravenously into adult mice at a dose of 1.25 mg/kg body weight. The sequence is that of Mu-segestritoxin-Sf1b from Segestria florentina (Tube-web spider).